Here is a 364-residue protein sequence, read N- to C-terminus: DNA replication and repair protein RecF (364 aa).

23-30 provides a ligand contact to ATP; it reads GPNGIGKS.

The protein belongs to the RecF family.

Its subcellular location is the cytoplasm. Its function is as follows. The RecF protein is involved in DNA metabolism; it is required for DNA replication and normal SOS inducibility. RecF binds preferentially to single-stranded, linear DNA. It also seems to bind ATP. In Synechococcus sp. (strain CC9605), this protein is DNA replication and repair protein RecF.